Here is a 128-residue protein sequence, read N- to C-terminus: B2 protein (128 aa).

An N-terminal signal peptide occupies residues 1-10; that stretch reads SLILLVAVQA. 2 cysteine pairs are disulfide-bonded: Cys26-Cys57 and Cys97-Cys114.

It belongs to the PBP/GOBP family. Post-translationally, N-glycosylated. Tubular accessory sex gland.

The protein resides in the secreted. Functionally, may be a carrier protein for lipids. The protein is B2 protein of Tenebrio molitor (Yellow mealworm beetle).